We begin with the raw amino-acid sequence, 336 residues long: DNA-directed RNA polymerase subunit alpha (336 aa).

Residues 1-232 (MIQKNWQELI…DQLGVFVNFD (232 aa)) are alpha N-terminal domain (alpha-NTD). The segment at 248–336 (FNPALLKKVD…DLAKRYEDQY (89 aa)) is alpha C-terminal domain (alpha-CTD).

It belongs to the RNA polymerase alpha chain family. In terms of assembly, homodimer. The RNAP catalytic core consists of 2 alpha, 1 beta, 1 beta' and 1 omega subunit. When a sigma factor is associated with the core the holoenzyme is formed, which can initiate transcription.

It catalyses the reaction RNA(n) + a ribonucleoside 5'-triphosphate = RNA(n+1) + diphosphate. DNA-dependent RNA polymerase catalyzes the transcription of DNA into RNA using the four ribonucleoside triphosphates as substrates. In Rhizobium radiobacter (Agrobacterium tumefaciens), this protein is DNA-directed RNA polymerase subunit alpha.